We begin with the raw amino-acid sequence, 253 residues long: Tyrosine recombinase XerD-like (253 aa).

The region spanning 8–81 is the Core-binding (CB) domain; the sequence is KQLTTQITNF…AVNQFLLYLY (74 aa). The Tyr recombinase domain maps to 93-253; the sequence is SETAPLPSQQ…PVTLEKYYKT (161 aa). Active-site residues include K157 and R218. The active-site O-(3'-phospho-DNA)-tyrosine intermediate is Y250.

This sequence belongs to the 'phage' integrase family. XerD-like subfamily.

Its subcellular location is the cytoplasm. Functionally, putative tyrosine recombinase. Not involved in the cutting and rejoining of the recombining DNA molecules on dif(SL) site. The protein is Tyrosine recombinase XerD-like of Streptococcus thermophilus (strain CNRZ 1066).